The sequence spans 106 residues: Large ribosomal subunit protein uL24 (106 aa).

It belongs to the universal ribosomal protein uL24 family. As to quaternary structure, part of the 50S ribosomal subunit.

Its function is as follows. One of two assembly initiator proteins, it binds directly to the 5'-end of the 23S rRNA, where it nucleates assembly of the 50S subunit. In terms of biological role, one of the proteins that surrounds the polypeptide exit tunnel on the outside of the subunit. In Laribacter hongkongensis (strain HLHK9), this protein is Large ribosomal subunit protein uL24.